An 87-amino-acid polypeptide reads, in one-letter code: NADH dehydrogenase [ubiquinone] 1 alpha subcomplex subunit 4-like 2 (87 aa).

Belongs to the complex I NDUFA4 subunit family.

This Homo sapiens (Human) protein is NADH dehydrogenase [ubiquinone] 1 alpha subcomplex subunit 4-like 2 (NDUFA4L2).